The sequence spans 625 residues: Probable receptor-like protein kinase At1g11050 (625 aa).

An N-terminal signal peptide occupies residues 1 to 20 (MPNSILFLLLSFLYLTNCVA). Topologically, residues 21-227 (QSPSQTCPLD…PLNSKKKRHT (207 aa)) are extracellular. N-linked (GlcNAc...) asparagine glycans are attached at residues asparagine 40, asparagine 106, asparagine 121, and asparagine 177. The chain crosses the membrane as a helical span at residues 228-248 (VALALGITGAIFGALVIAGLI). Residues 249-625 (CLYFRFGKAV…LQIHSGDMLR (377 aa)) are Cytoplasmic-facing. A Protein kinase domain is found at 295–555 (FSQKNFIGRG…NPKGIMERFL (261 aa)). ATP contacts are provided by residues 301–309 (IGRGGFGFV) and lysine 323. Aspartate 426 functions as the Proton acceptor in the catalytic mechanism.

Belongs to the protein kinase superfamily. Ser/Thr protein kinase family.

It is found in the membrane. The catalysed reaction is L-seryl-[protein] + ATP = O-phospho-L-seryl-[protein] + ADP + H(+). The enzyme catalyses L-threonyl-[protein] + ATP = O-phospho-L-threonyl-[protein] + ADP + H(+). This Arabidopsis thaliana (Mouse-ear cress) protein is Probable receptor-like protein kinase At1g11050.